Here is a 453-residue protein sequence, read N- to C-terminus: MDVFPSTTPDEAVRKSAKRTAELFGSEYLLVTPSVADGSIGLSYRKKAEYSDVKELPPALAEKQAKAAAAGRAKRPKIQPQTKPQADGSGASMSLVKRAAGPAAGGVGGEGQPKSLIQRPSATRQQRPDWHPPWKLMRVISGHLGWVRSLAVEPNNEWFASGAGDRTIKIWNLATGALRLTLTGHISTVRGLAVSPRHPYLFSCGEDKMVKCWDLETNKVIRHYHGHLSGVYTLALHPRLDLLVTGGRDGVARVWDMRTRSNIHVLSGHKGTVADLKCQEADPQIITGSLDATVRLWDLAAGKTMGVLTHHKKGVRNLAIHPREFTFASASTGSIKQWKCPEGDFMQNFEGHNAVINSLAVNEDNVLFSGGDNGSMCFWDWKTGYKFQSIDTMAQPGSLDAEAGIMSATFDRTGLRLITGEADKTIKVWKPDDEATPESHPVTWAPTLGRQRY.

The span at Glu62 to Gly71 shows a compositional bias: low complexity. Positions Glu62–Asp129 are disordered. WD repeat units lie at residues Gly142 to Thr181, Gly184 to His223, Gly226 to Val265, Gly268 to Thr309, His311 to Glu350, Gly351 to Ser389, and Asp400 to Ser439. The tract at residues Asp432 to Tyr453 is disordered.

The protein belongs to the WD repeat PRL1/PRL2 family. Associated with the spliceosome.

The protein localises to the cytoplasm. It is found in the nucleus. In terms of biological role, involved in pre-mRNA splicing and required for cell cycle progression at G2/M. This is Pre-mRNA-splicing factor prp46 (prp46) from Aspergillus fumigatus (strain ATCC MYA-4609 / CBS 101355 / FGSC A1100 / Af293) (Neosartorya fumigata).